Consider the following 179-residue polypeptide: Large ribosomal subunit protein uL10 (179 aa).

Belongs to the universal ribosomal protein uL10 family. In terms of assembly, part of the ribosomal stalk of the 50S ribosomal subunit. The N-terminus interacts with L11 and the large rRNA to form the base of the stalk. The C-terminus forms an elongated spine to which L12 dimers bind in a sequential fashion forming a multimeric L10(L12)X complex.

In terms of biological role, forms part of the ribosomal stalk, playing a central role in the interaction of the ribosome with GTP-bound translation factors. The protein is Large ribosomal subunit protein uL10 of Polynucleobacter necessarius subsp. necessarius (strain STIR1).